We begin with the raw amino-acid sequence, 160 residues long: Phosphopantetheine adenylyltransferase (160 aa).

Ser-9 provides a ligand contact to substrate. ATP contacts are provided by residues 9–10 and His-17; that span reads SF. Lys-41, Val-73, and Lys-87 together coordinate substrate. ATP-binding positions include 88-90, Glu-98, and 122-128; these read GLR and YSFVSSS.

It belongs to the bacterial CoaD family. In terms of assembly, homohexamer. Mg(2+) is required as a cofactor.

It localises to the cytoplasm. It carries out the reaction (R)-4'-phosphopantetheine + ATP + H(+) = 3'-dephospho-CoA + diphosphate. The protein operates within cofactor biosynthesis; coenzyme A biosynthesis; CoA from (R)-pantothenate: step 4/5. Its function is as follows. Reversibly transfers an adenylyl group from ATP to 4'-phosphopantetheine, yielding dephospho-CoA (dPCoA) and pyrophosphate. The chain is Phosphopantetheine adenylyltransferase from Mycobacterium leprae (strain TN).